A 493-amino-acid polypeptide reads, in one-letter code: Galactose-1-phosphate uridylyltransferase (493 aa).

It belongs to the galactose-1-phosphate uridylyltransferase type 2 family.

The protein resides in the cytoplasm. It catalyses the reaction alpha-D-galactose 1-phosphate + UDP-alpha-D-glucose = alpha-D-glucose 1-phosphate + UDP-alpha-D-galactose. It functions in the pathway carbohydrate metabolism; galactose metabolism. In Lactococcus lactis subsp. cremoris (strain SK11), this protein is Galactose-1-phosphate uridylyltransferase.